Reading from the N-terminus, the 956-residue chain is Glutamate receptor ionotropic, kainate 4 (956 aa).

A signal peptide spans 1–20 (MPRVSAPLVLLPAWLVMVAC). The Extracellular segment spans residues 21 to 545 (SPHSLRIAAI…YFSFLDPFSP (525 aa)). Asn158, Asn220, Asn272, Asn286, Asn323, Asn408, Asn415, and Asn479 each carry an N-linked (GlcNAc...) asparagine glycan. The L-glutamate site is built by Gly500, Thr502, and Arg507. The chain crosses the membrane as a helical span at residues 546-566 (GVWLFMLLAYLAVSCVLFLVA). Residues 567-623 (RLTPYEWYSPHPCAQGRCNLLVNQYSLGNSLWFPVGGFMQQGSTIAPRALSTRCVSG) are Cytoplasmic-facing. Residues 624–644 (VWWAFTLIIISSYTANLAAFL) traverse the membrane as a helical segment. At 645–804 (TVQRMDVPIE…HRAKGLGMEN (160 aa)) the chain is on the extracellular side. L-glutamate is bound by residues Ser674, Ser675, and Glu723. N-linked (GlcNAc...) asparagine glycosylation is present at Asn736. A helical transmembrane segment spans residues 805 to 825 (IGGIFVVLICGLIVAIFMAML). Residues 826–956 (EFLWTLRHSE…EKTTNSSEPE (131 aa)) are Cytoplasmic-facing. Disordered stretches follow at residues 863–889 (RRRA…TLSN) and 931–956 (LRAR…SEPE). Basic and acidic residues predominate over residues 939-948 (RSEESLEWEK).

Belongs to the glutamate-gated ion channel (TC 1.A.10.1) family. GRIK4 subfamily. As to quaternary structure, homodimer. Can form functional heteromeric receptors with GRIK1, GRIK2 and GRIK3.

It is found in the cell membrane. The protein localises to the postsynaptic cell membrane. It localises to the presynaptic cell membrane. Ionotropic glutamate receptor that functions as a cation-permeable ligand-gated ion channel. Cannot form functional channels on its own. Shows channel activity only in heteromeric assembly with GRIK1, GRIK2 and GRIK3 subunits. In Homo sapiens (Human), this protein is Glutamate receptor ionotropic, kainate 4 (GRIK4).